Here is a 245-residue protein sequence, read N- to C-terminus: 1-(5-phosphoribosyl)-5-[(5-phosphoribosylamino)methylideneamino] imidazole-4-carboxamide isomerase (245 aa).

Asp8 serves as the catalytic Proton acceptor. Residue Asp131 is the Proton donor of the active site.

The protein belongs to the HisA/HisF family.

The protein resides in the cytoplasm. It carries out the reaction 1-(5-phospho-beta-D-ribosyl)-5-[(5-phospho-beta-D-ribosylamino)methylideneamino]imidazole-4-carboxamide = 5-[(5-phospho-1-deoxy-D-ribulos-1-ylimino)methylamino]-1-(5-phospho-beta-D-ribosyl)imidazole-4-carboxamide. It functions in the pathway amino-acid biosynthesis; L-histidine biosynthesis; L-histidine from 5-phospho-alpha-D-ribose 1-diphosphate: step 4/9. The sequence is that of 1-(5-phosphoribosyl)-5-[(5-phosphoribosylamino)methylideneamino] imidazole-4-carboxamide isomerase from Neisseria gonorrhoeae (strain NCCP11945).